We begin with the raw amino-acid sequence, 398 residues long: 1-deoxy-D-xylulose 5-phosphate reductoisomerase (398 aa).

NADPH contacts are provided by T10, G11, S12, I13, G36, K37, N38, and N124. K125 contacts 1-deoxy-D-xylulose 5-phosphate. Residue E126 participates in NADPH binding. D150 contributes to the Mn(2+) binding site. 1-deoxy-D-xylulose 5-phosphate is bound by residues S151, E152, S186, and H209. Mn(2+) is bound at residue E152. G215 is an NADPH binding site. Positions 222, 227, 228, and 231 each coordinate 1-deoxy-D-xylulose 5-phosphate. E231 contacts Mn(2+).

It belongs to the DXR family. As to quaternary structure, homodimer. Mg(2+) is required as a cofactor. Requires Mn(2+) as cofactor. It depends on Co(2+) as a cofactor.

It catalyses the reaction 2-C-methyl-D-erythritol 4-phosphate + NADP(+) = 1-deoxy-D-xylulose 5-phosphate + NADPH + H(+). It participates in isoprenoid biosynthesis; isopentenyl diphosphate biosynthesis via DXP pathway; isopentenyl diphosphate from 1-deoxy-D-xylulose 5-phosphate: step 1/6. Its activity is regulated as follows. Inhibited by fosmidomycin. Its function is as follows. Catalyzes the NADPH-dependent rearrangement and reduction of 1-deoxy-D-xylulose-5-phosphate (DXP) to 2-C-methyl-D-erythritol 4-phosphate (MEP). In Escherichia coli (strain K12), this protein is 1-deoxy-D-xylulose 5-phosphate reductoisomerase (dxr).